Here is a 293-residue protein sequence, read N- to C-terminus: MVSPDHEPMDDALRVSVLSEALPYIQRFAGRRIVVKYGGAAMVHAELQSAVFRDLALLRSVGVQPVVVHGGGPEINHWLKRLDIDPEFREGLRVTDAATMDVVEMVLVGRVNKQIVNGLNRLGARAVGLSGSDGCLVEARAWGDGSHGLVGDVARVNPDVLEPLLDRGYVPVISSVAANAEGVAHNINADTVAGELAAALEAEKLILLTDTPGILRDRESPESLIRQLKLSEARQLIDDGIVAGGMTPKTECCIRALAQGVSAAHIVDGRVAHALLLEVFTDAGIGTMVLGRS.

Substrate-binding positions include 71–72, R93, and N186; that span reads GG.

This sequence belongs to the acetylglutamate kinase family. ArgB subfamily.

It is found in the cytoplasm. The enzyme catalyses N-acetyl-L-glutamate + ATP = N-acetyl-L-glutamyl 5-phosphate + ADP. The protein operates within amino-acid biosynthesis; L-arginine biosynthesis; N(2)-acetyl-L-ornithine from L-glutamate: step 2/4. Catalyzes the ATP-dependent phosphorylation of N-acetyl-L-glutamate. This is Acetylglutamate kinase from Synechococcus sp. (strain WH7803).